A 634-amino-acid chain; its full sequence is Kelch-like protein 22 (634 aa).

Position 2 is an N-acetylalanine (Ala2). The 68-residue stretch at 50–117 (FDVVLVVEGR…IYTSELELSL (68 aa)) folds into the BTB domain. Kelch repeat units lie at residues 299-349 (CVVG…VLNN), 350-399 (FVYL…VVGK), 400-446 (YIYA…TLQG), 448-493 (MYIT…ALLD), 494-544 (KLFV…VLDN), and 545-593 (RIYV…VLTL). Thr463 carries the phosphothreonine modification. Residue Tyr466 is modified to Phosphotyrosine. Thr475 bears the Phosphothreonine mark. Residues 600–634 (EQPRGTPNRSQADADFASEVMSVSDWEEFDNSSED) are disordered. Thr605 is subject to Phosphothreonine. Acidic residues predominate over residues 624–634 (DWEEFDNSSED).

In terms of assembly, component of the BCR(KLHL22) E3 ubiquitin ligase complex, at least composed of CUL3, KLHL22 and RBX1. Interacts with PLK1. Interacts with DEPDC5 (via DEP domain); the interaction depends on amino acid availability. Interacts with YWHAE; required for the nuclear localization of KLHL22 upon amino acid starvation.

It is found in the cytoplasm. It localises to the cytosol. Its subcellular location is the cytoskeleton. The protein localises to the microtubule organizing center. The protein resides in the centrosome. It is found in the spindle. It localises to the nucleus. Its subcellular location is the lysosome. It participates in protein modification; protein ubiquitination. In terms of biological role, substrate-specific adapter of a BCR (BTB-CUL3-RBX1) E3 ubiquitin ligase complex required for chromosome alignment and localization of PLK1 at kinetochores. The BCR(KLHL22) ubiquitin ligase complex mediates monoubiquitination of PLK1, leading to PLK1 dissociation from phosphoreceptor proteins and subsequent removal from kinetochores, allowing silencing of the spindle assembly checkpoint (SAC) and chromosome segregation. Monoubiquitination of PLK1 does not lead to PLK1 degradation. The BCR(KLHL22) ubiquitin ligase complex is also responsible for the amino acid-stimulated 'Lys-48' polyubiquitination and proteasomal degradation of DEPDC5. Through the degradation of DEPDC5, releases the GATOR1 complex-mediated inhibition of the TORC1 pathway. It is therefore an amino acid-dependent activator within the amino acid-sensing branch of the TORC1 pathway, indirectly regulating different cellular processes including cell growth and autophagy. This is Kelch-like protein 22 from Rattus norvegicus (Rat).